Reading from the N-terminus, the 352-residue chain is MSDRTEQVATSDIPRPTQNLRTRVVSYFPGLAVAVLIAISAQFLSEHYGAPATLMALLLGMSLNFLSESGARTVPGIHFASRAVLRFGVALLGARVSLEVLSDLGVSLLCLVTTALACTILFAIIVGKFAGMDWRLSLLTGGAVAICGASAAVALNAVLPPRQNSDRDLALTIVAITLLSTSAMVLYPVLASHLQFDAKESGVFIGGTIHDVAQVVGAGFAMSEETGQIATLVKIVRVSLLAPTIIAVLIMVTVLGAGAGQKPQKLGQVIPGFVLGFAFLAALKSMGFLPAAAGDVANDLSRWLLLIALGAVGLKTSVKEFASIRPSHVTLALLATAFLAAFIVVGLLWYRG.

The next 10 membrane-spanning stretches (helical) occupy residues 24–43, 48–67, 104–126, 136–158, 169–191, 201–223, 235–257, 272–294, 301–318, and 328–350; these read VVSY…SAQF, YGAP…NFLS, LGVS…AIIV, LSLL…LNAV, LALT…PVLA, SGVF…FAMS, IVRV…VLGA, GFVL…AAAG, SRWL…KTSV, and HVTL…LLWY.

It belongs to the UPF0324 family.

It localises to the cell membrane. This is UPF0324 membrane protein RA0957 from Rhizobium meliloti (strain 1021) (Ensifer meliloti).